We begin with the raw amino-acid sequence, 518 residues long: Adenine deaminase (518 aa).

Belongs to the metallo-dependent hydrolases superfamily. Adenine deaminase family. Mn(2+) is required as a cofactor.

The enzyme catalyses adenine + H2O + H(+) = hypoxanthine + NH4(+). This is Adenine deaminase from Methanoculleus marisnigri (strain ATCC 35101 / DSM 1498 / JR1).